A 76-amino-acid polypeptide reads, in one-letter code: Conotoxin Cal29b (76 aa).

The N-terminal stretch at 1–43 (MKLTCVLIVAVLILAACQFTAANMARYGKTQIARSDVKSIDAR) is a signal peptide.

Belongs to the conotoxin O1 superfamily. May contain 4 disulfide bonds. Expressed by the venom duct.

It localises to the secreted. In terms of biological role, is able to inhibit the growth of Mycobacterium tuberculosis (MIC=0.22-3.52 uM against strain H37Rv and 2 multidrug-resistant strains). May also show neurotoxic activity. The chain is Conotoxin Cal29b from Californiconus californicus (California cone).